A 333-amino-acid polypeptide reads, in one-letter code: Adenosine deaminase (333 aa).

Residues H12 and H14 each coordinate Zn(2+). Positions 14, 16, and 170 each coordinate substrate. A Zn(2+)-binding site is contributed by H197. The Proton donor role is filled by E200. Residue D278 coordinates Zn(2+). D279 is a substrate binding site.

It belongs to the metallo-dependent hydrolases superfamily. Adenosine and AMP deaminases family. Adenosine deaminase subfamily. Zn(2+) serves as cofactor.

The catalysed reaction is adenosine + H2O + H(+) = inosine + NH4(+). The enzyme catalyses 2'-deoxyadenosine + H2O + H(+) = 2'-deoxyinosine + NH4(+). Catalyzes the hydrolytic deamination of adenosine and 2-deoxyadenosine. The protein is Adenosine deaminase of Salmonella dublin (strain CT_02021853).